Consider the following 742-residue polypeptide: Eukaryotic translation initiation factor 3 subunit B (742 aa).

The span at 1–10 (MAPSFDTLSE) shows a compositional bias: polar residues. The disordered stretch occupies residues 1 to 20 (MAPSFDTLSEQDLHEEEEEE). One can recognise an RRM domain in the interval 40 to 126 (TFVVIDGLPI…HTLAVNKLMD (87 aa)). WD repeat units follow at residues 193-230 (AHWTQLFVQWSPKGTYLASVHPQGIQLWGGPAFSKLKQ), 232-290 (PHPF…RSFV), 304-345 (QPKK…LLGK), 515-558 (IEKK…EKPE), and 573-611 (VEHYGVTDVDWDPTGRYVVSSASVWTHSMENGWNLHTFA).

Belongs to the eIF-3 subunit B family. Component of the eukaryotic translation initiation factor 3 (eIF-3) complex.

It localises to the cytoplasm. Its function is as follows. RNA-binding component of the eukaryotic translation initiation factor 3 (eIF-3) complex, which is involved in protein synthesis of a specialized repertoire of mRNAs and, together with other initiation factors, stimulates binding of mRNA and methionyl-tRNAi to the 40S ribosome. The eIF-3 complex specifically targets and initiates translation of a subset of mRNAs involved in cell proliferation. This chain is Eukaryotic translation initiation factor 3 subunit B (prt1), found in Aspergillus terreus (strain NIH 2624 / FGSC A1156).